The chain runs to 362 residues: H-2 class I histocompatibility antigen, L-D alpha chain (362 aa).

The first 24 residues, 1-24, serve as a signal peptide directing secretion; sequence MGAMAPRTLLLLLAAALAPTQTRA. An alpha-1 region spans residues 25 to 114; the sequence is GPHSMRYFET…LLGYYNQSAG (90 aa). At 25–309 the chain is on the extracellular side; it reads GPHSMRYFET…PPPSTDSYMV (285 aa). A glycan (N-linked (GlcNAc...) asparagine) is linked at N110. Positions 115 to 206 are alpha-2; that stretch reads GTHTLQWMYG…KNGNATLLRT (92 aa). C125 and C188 are disulfide-bonded. 2 N-linked (GlcNAc...) asparagine glycosylation sites follow: N200 and N280. Positions 207–298 are alpha-3; that stretch reads DSPKAHVTHH…GLPEPLTLRW (92 aa). The Ig-like C1-type domain occupies 209 to 297; sequence PKAHVTHHPR…EGLPEPLTLR (89 aa). An intrachain disulfide couples C227 to C283. The segment at 299–309 is connecting peptide; the sequence is EPPPSTDSYMV. A helical membrane pass occupies residues 310–331; sequence IVAVLGVLGAMAIIGAVVAFVM. Residues 332–362 lie on the Cytoplasmic side of the membrane; that stretch reads KRRRNTGGKGGDYALAPGSQSSEMSLRDCKA. The tract at residues 340 to 362 is disordered; it reads KGGDYALAPGSQSSEMSLRDCKA. 2 positions are modified to phosphoserine: S353 and S356.

It belongs to the MHC class I family. In terms of assembly, heterodimer of an alpha chain and a beta chain (beta-2-microglobulin).

The protein resides in the membrane. Its function is as follows. Involved in the presentation of foreign antigens to the immune system. The protein is H-2 class I histocompatibility antigen, L-D alpha chain (H2-L) of Mus musculus (Mouse).